Here is a 50-residue protein sequence, read N- to C-terminus: Putative protein HokF (50 aa).

A helical transmembrane segment spans residues 5 to 25; it reads YALVAVIVLCLTVPGFTLLVG.

This sequence belongs to the Hok/Gef family.

It is found in the cell inner membrane. In terms of biological role, toxic component of a type I toxin-antitoxin (TA) system. When overexpressed kills cells within minutes; causes collapse of the transmembrane potential and arrest of respiration. Its toxic effect is probably neutralized by an antisense antitoxin Sok RNA. In Escherichia coli O157:H7, this protein is Putative protein HokF (hokF).